The chain runs to 557 residues: Urocanate hydratase (557 aa).

NAD(+) is bound by residues 53-54 (GG), glutamine 131, 177-179 (GMG), glutamate 197, arginine 202, 243-244 (NA), 264-268 (QTSAH), 274-275 (YL), and tyrosine 323. Cysteine 411 is a catalytic residue. The tract at residues 445–464 (LDSGSVSSPNRETESMRDGS) is disordered. The span at 455-464 (RETESMRDGS) shows a compositional bias: basic and acidic residues. Residue glycine 493 participates in NAD(+) binding.

Belongs to the urocanase family. NAD(+) is required as a cofactor.

The protein localises to the cytoplasm. The enzyme catalyses 4-imidazolone-5-propanoate = trans-urocanate + H2O. The protein operates within amino-acid degradation; L-histidine degradation into L-glutamate; N-formimidoyl-L-glutamate from L-histidine: step 2/3. In terms of biological role, catalyzes the conversion of urocanate to 4-imidazolone-5-propionate. The chain is Urocanate hydratase from Pseudomonas putida (strain W619).